Consider the following 332-residue polypeptide: Phenylalanine--tRNA ligase alpha subunit (332 aa).

E254 lines the Mg(2+) pocket.

The protein belongs to the class-II aminoacyl-tRNA synthetase family. Phe-tRNA synthetase alpha subunit type 1 subfamily. As to quaternary structure, tetramer of two alpha and two beta subunits. Mg(2+) is required as a cofactor.

Its subcellular location is the cytoplasm. The enzyme catalyses tRNA(Phe) + L-phenylalanine + ATP = L-phenylalanyl-tRNA(Phe) + AMP + diphosphate + H(+). This Hydrogenovibrio crunogenus (strain DSM 25203 / XCL-2) (Thiomicrospira crunogena) protein is Phenylalanine--tRNA ligase alpha subunit.